We begin with the raw amino-acid sequence, 216 residues long: MALYRPLLLHHPTSPSVTTFLRNYPSKPIKFSSLPFLHRCRKSRVSSSSARCCSSMESPPEGYRRNVGVCLMNSSKKIFTASRLDIPSAWQMPQGGIDEGEDPRVAVMRELKEETGVHSAEILAEAPHWITYDFPPDVREKLKVRWGSDWKGQAQKWFLLKFTGKDEEINLLGDGTEKPEFGEWSWTSPDQVVENAVEFKKPVYKEVMSAFASHLQ.

A chloroplast-targeting transit peptide spans 1-53 (MALYRPLLLHHPTSPSVTTFLRNYPSKPIKFSSLPFLHRCRKSRVSSSSARCC). The 148-residue stretch at 62 to 209 (GYRRNVGVCL…KKPVYKEVMS (148 aa)) folds into the Nudix hydrolase domain. The Nudix box signature appears at 95 to 116 (GGIDEGEDPRVAVMRELKEETG). Residues E110 and E114 each coordinate Mn(2+).

It belongs to the Nudix hydrolase family. The cofactor is Mg(2+). It depends on Mn(2+) as a cofactor. In terms of tissue distribution, expressed in roots, leaves, stems and inflorescences.

It is found in the plastid. It localises to the chloroplast. Mediates the hydrolysis of some nucleoside diphosphate derivatives. Can use diadenosine 5',5'''-P(1)P(5) pentaphosphate (Ap(5)A), diadenosine 5',5'''-P(1)P(4) tetraphosphate (Ap(4)A) and diadenosine 5',5'''-P(1)P(3) triphosphate (Ap(3)A) as substrates. This is Nudix hydrolase 26, chloroplastic (NUDT26) from Arabidopsis thaliana (Mouse-ear cress).